The chain runs to 332 residues: GTP cyclohydrolase-2 (332 aa).

Disordered regions lie at residues 1–20 (MASK…SETH) and 25–46 (PLLS…IPPE). The span at 29–41 (PTLTPSHIPSQTP) shows a compositional bias: polar residues. 171 to 175 (RIHSE) lines the GTP pocket. Positions 176, 187, and 189 each coordinate Zn(2+). GTP is bound by residues Gln-192, 214–216 (EGR), and Thr-236. Residue Asp-248 is the Proton acceptor of the active site. The active-site Nucleophile is Arg-250. GTP-binding residues include Thr-271 and Lys-276.

The protein belongs to the GTP cyclohydrolase II family. Zn(2+) is required as a cofactor.

It catalyses the reaction GTP + 4 H2O = 2,5-diamino-6-hydroxy-4-(5-phosphoribosylamino)-pyrimidine + formate + 2 phosphate + 3 H(+). It functions in the pathway cofactor biosynthesis; riboflavin biosynthesis; 5-amino-6-(D-ribitylamino)uracil from GTP: step 1/4. Functionally, catalyzes the conversion of GTP to 2,5-diamino-6-ribosylamino-4(3H)-pyrimidinone 5'-phosphate (DARP), formate and pyrophosphate. This Meyerozyma guilliermondii (strain ATCC 6260 / CBS 566 / DSM 6381 / JCM 1539 / NBRC 10279 / NRRL Y-324) (Yeast) protein is GTP cyclohydrolase-2 (RIB1).